A 371-amino-acid polypeptide reads, in one-letter code: Integrator complex assembly factor WDR73 (371 aa).

WD repeat units follow at residues 81-121 (FSDR…DVIE), 273-313 (SPDP…GKKT), and 333-371 (DSAP…LQAS).

It belongs to the WD repeat WDR73 family. Interacts with INTS9 and INTS11; the interaction is direct. Part of the multiprotein complex composed of BRAT1, WDR73, as well as integrator complex subunits INTS9 and INTS11.

Its subcellular location is the cytoplasm. The protein localises to the cytoskeleton. The protein resides in the spindle. It is found in the spindle pole. It localises to the cleavage furrow. Its function is as follows. Component of a multiprotein complex required for the assembly of the RNA endonuclease module of the integrator complex. Associates with INTS9 and INTS11 in the cytoplasm, stabilizing the INTS9-INTS11 heterodimer and blocking the active site of INTS11. BRAT1 then joins the complex and plugs the active site of INTS11, leading to WDR73 release and nuclear import of INTS9 and INTS11. This is Integrator complex assembly factor WDR73 (Wdr73) from Mus musculus (Mouse).